Reading from the N-terminus, the 885-residue chain is Alanine--tRNA ligase (885 aa).

Positions 571, 575, 674, and 678 each coordinate Zn(2+).

The protein belongs to the class-II aminoacyl-tRNA synthetase family. Requires Zn(2+) as cofactor.

It is found in the cytoplasm. The catalysed reaction is tRNA(Ala) + L-alanine + ATP = L-alanyl-tRNA(Ala) + AMP + diphosphate. In terms of biological role, catalyzes the attachment of alanine to tRNA(Ala) in a two-step reaction: alanine is first activated by ATP to form Ala-AMP and then transferred to the acceptor end of tRNA(Ala). Also edits incorrectly charged Ser-tRNA(Ala) and Gly-tRNA(Ala) via its editing domain. The polypeptide is Alanine--tRNA ligase (Clavibacter michiganensis subsp. michiganensis (strain NCPPB 382)).